Consider the following 91-residue polypeptide: Large ribosomal subunit protein uL23 (91 aa).

Belongs to the universal ribosomal protein uL23 family. Part of the 50S ribosomal subunit. Contacts protein L29, and trigger factor when it is bound to the ribosome.

One of the early assembly proteins it binds 23S rRNA. One of the proteins that surrounds the polypeptide exit tunnel on the outside of the ribosome. Forms the main docking site for trigger factor binding to the ribosome. The polypeptide is Large ribosomal subunit protein uL23 (Staphylococcus aureus (strain USA300)).